Reading from the N-terminus, the 517-residue chain is Putative thymidine phosphorylase (517 aa).

The protein belongs to the thymidine/pyrimidine-nucleoside phosphorylase family. Type 2 subfamily.

It carries out the reaction thymidine + phosphate = 2-deoxy-alpha-D-ribose 1-phosphate + thymine. The sequence is that of Putative thymidine phosphorylase from Legionella pneumophila (strain Paris).